The following is a 323-amino-acid chain: Low affinity immunoglobulin gamma Fc region receptor II-c (323 aa).

The first 42 residues, 1 to 42 (MGILSFLPVLATESDWADCKSPQPWGHMLLWTAVLFLAPVAG), serve as a signal peptide directing secretion. The Extracellular segment spans residues 43–223 (TPAAPPKAVL…VQAPSSSPMG (181 aa)). 2 Ig-like C2-type domains span residues 48 to 127 (PKAV…VHLT) and 131 to 213 (EWLV…VTIT). Cystine bridges form between C71-C113 and C152-C196. Residues N106, N180, and N187 are each glycosylated (N-linked (GlcNAc...) asparagine). The chain crosses the membrane as a helical span at residues 224–246 (IIVAVVTGIAVAAIVAAVVALIY). Over 247–323 (CRKKRISANS…PPNDHVNSNN (77 aa)) the chain is Cytoplasmic. The interval 277–323 (KRQPEETNNDYETADGGYMTLNPRAPTDDDKNIYLTLPPNDHVNSNN) is disordered. A phosphotyrosine; by SRC-type Tyr-kinases mark is found at Y294 and Y310.

Phosphorylated by SRC-type Tyr-kinases such as LYN, BLK, FYN and SYK. In terms of tissue distribution, isoform IIC1 is detected in monocytes, macrophages, polymorphonuclear cells and natural killer cells.

Its subcellular location is the cytoplasm. The protein localises to the cell membrane. Functionally, receptor for the Fc region of complexed immunoglobulins gamma. Low affinity receptor. Involved in a variety of effector and regulatory functions such as phagocytosis of immune complexes and modulation of antibody production by B-cells. The protein is Low affinity immunoglobulin gamma Fc region receptor II-c (FCGR2C) of Homo sapiens (Human).